A 467-amino-acid polypeptide reads, in one-letter code: 3-isopropylmalate dehydratase large subunit (467 aa).

C347, C407, and C410 together coordinate [4Fe-4S] cluster.

This sequence belongs to the aconitase/IPM isomerase family. LeuC type 1 subfamily. Heterodimer of LeuC and LeuD. It depends on [4Fe-4S] cluster as a cofactor.

The enzyme catalyses (2R,3S)-3-isopropylmalate = (2S)-2-isopropylmalate. Its pathway is amino-acid biosynthesis; L-leucine biosynthesis; L-leucine from 3-methyl-2-oxobutanoate: step 2/4. Catalyzes the isomerization between 2-isopropylmalate and 3-isopropylmalate, via the formation of 2-isopropylmaleate. The sequence is that of 3-isopropylmalate dehydratase large subunit from Prochlorococcus marinus (strain MIT 9301).